The following is a 161-amino-acid chain: Ribonuclease H (161 aa).

The region spanning 3–144 (GLKQISIYTD…CDDLARQAAE (142 aa)) is the RNase H type-1 domain. Mg(2+) contacts are provided by Asp12, Glu50, Asp72, and Asp136. The segment at 133-161 (ERCDDLARQAAEAKPSQEDSGYINQQAQA) is disordered. The segment covering 150 to 161 (EDSGYINQQAQA) has biased composition (polar residues).

It belongs to the RNase H family. In terms of assembly, monomer. Mg(2+) serves as cofactor.

The protein localises to the cytoplasm. The enzyme catalyses Endonucleolytic cleavage to 5'-phosphomonoester.. Functionally, endonuclease that specifically degrades the RNA of RNA-DNA hybrids. This chain is Ribonuclease H, found in Shewanella halifaxensis (strain HAW-EB4).